The sequence spans 811 residues: LPS-assembly protein LptD (811 aa).

Residues 1–17 form the signal peptide; the sequence is MTEPNRARKTRQRTAFA. Residues 1–22 are disordered; the sequence is MTEPNRARKTRQRTAFAAPDQR.

Belongs to the LptD family. In terms of assembly, component of the lipopolysaccharide transport and assembly complex. Interacts with LptE and LptA.

It is found in the cell outer membrane. Functionally, together with LptE, is involved in the assembly of lipopolysaccharide (LPS) at the surface of the outer membrane. The protein is LPS-assembly protein LptD of Ralstonia nicotianae (strain ATCC BAA-1114 / GMI1000) (Ralstonia solanacearum).